The sequence spans 404 residues: Cysteine desulfurase IscS (404 aa).

Pyridoxal 5'-phosphate-binding positions include 75 to 76 (AT), Asn155, Gln183, and 203 to 205 (SGH). An N6-(pyridoxal phosphate)lysine modification is found at Lys206. Residue Thr243 participates in pyridoxal 5'-phosphate binding. Cys328 functions as the Cysteine persulfide intermediate in the catalytic mechanism. Cys328 contributes to the [2Fe-2S] cluster binding site.

Belongs to the class-V pyridoxal-phosphate-dependent aminotransferase family. NifS/IscS subfamily. Homodimer. Forms a heterotetramer with IscU, interacts with other sulfur acceptors. Requires pyridoxal 5'-phosphate as cofactor.

It localises to the cytoplasm. The catalysed reaction is (sulfur carrier)-H + L-cysteine = (sulfur carrier)-SH + L-alanine. Its pathway is cofactor biosynthesis; iron-sulfur cluster biosynthesis. Functionally, master enzyme that delivers sulfur to a number of partners involved in Fe-S cluster assembly, tRNA modification or cofactor biosynthesis. Catalyzes the removal of elemental sulfur and selenium atoms from cysteine and selenocysteine to produce alanine. Functions as a sulfur delivery protein for Fe-S cluster synthesis onto IscU, an Fe-S scaffold assembly protein, as well as other S acceptor proteins. Also functions as a selenium delivery protein in the pathway for the biosynthesis of selenophosphate. This Salmonella schwarzengrund (strain CVM19633) protein is Cysteine desulfurase IscS.